The primary structure comprises 172 residues: C-phycocyanin beta subunit (172 aa).

An N4-methylasparagine modification is found at N72. Residues C82 and C153 each contribute to the (2R,3E)-phycocyanobilin site.

The protein belongs to the phycobiliprotein family. As to quaternary structure, heterodimer of an alpha and a beta subunit, which further assembles into trimers and the trimers into hexamers. Contains two covalently linked bilin chromophores.

Its subcellular location is the cellular thylakoid membrane. In terms of biological role, light-harvesting photosynthetic bile pigment-protein from the phycobiliprotein complex (phycobilisome, PBS). Phycocyanin is the major phycobiliprotein in the PBS rod. This chain is C-phycocyanin beta subunit (cpcB), found in Synechocystis sp. (strain PCC 6701).